Reading from the N-terminus, the 122-residue chain is uncharacterized protein (122 aa).

One can recognise an HIT domain in the interval 10-120 (VFARILRGEI…AGRRLGPMIT (111 aa)). Residues 104 to 108 (HLHIH) carry the Histidine triad motif motif.

This is an uncharacterized protein from Azospirillum brasilense.